We begin with the raw amino-acid sequence, 340 residues long: MTVSKIPIWLDCDPGHDDAIAILLGCFHPAFNLLGISTCFGNAPPENTDYNARSLLTAMGKAQAIPVYKGAQRPWKREPHYAPDIHGISGLDGTSLLPKPTFEARTDKTYIEAIEEAILANNGEISFVSTGALTTLATVFRCKPYLKKSVKYISIMGGGLHGLGNCNPNLSAEFNVWIDPDAANYIFRDPDVKDKCIVVPLNLTHKAIATYKVNEMIYNEKNNSKLRELFLELFQFFAHTYKDMQGFESGPPIHDPVALMPLLEFYGWDPSSAVGFRYKRMDISCIDDVFNENSGKIIIEKEYPNDSDVGTIIGLDLNIQYFWDQIFEALNRADKMSTIG.

The active site involves His254.

It belongs to the IUNH family.

The protein resides in the cytoplasm. The protein localises to the nucleus. It catalyses the reaction uridine + H2O = D-ribose + uracil. Functionally, also acts on cytidine. The chain is Uridine nucleosidase (URH1) from Saccharomyces cerevisiae (strain ATCC 204508 / S288c) (Baker's yeast).